A 289-amino-acid polypeptide reads, in one-letter code: Acetyl-coenzyme A carboxylase carboxyl transferase subunit beta (289 aa).

The region spanning 28-289 is the CoA carboxyltransferase N-terminal domain; sequence VMTKCPECKK…QGGGMAVWQS (262 aa). Positions 32, 35, 51, and 54 each coordinate Zn(2+). The C4-type zinc finger occupies 32–54; it reads CPECKKIMYTKELLKNLKVCVNC.

It belongs to the AccD/PCCB family. In terms of assembly, acetyl-CoA carboxylase is a heterohexamer composed of biotin carboxyl carrier protein (AccB), biotin carboxylase (AccC) and two subunits each of ACCase subunit alpha (AccA) and ACCase subunit beta (AccD). Zn(2+) serves as cofactor.

The protein resides in the cytoplasm. It catalyses the reaction N(6)-carboxybiotinyl-L-lysyl-[protein] + acetyl-CoA = N(6)-biotinyl-L-lysyl-[protein] + malonyl-CoA. The protein operates within lipid metabolism; malonyl-CoA biosynthesis; malonyl-CoA from acetyl-CoA: step 1/1. In terms of biological role, component of the acetyl coenzyme A carboxylase (ACC) complex. Biotin carboxylase (BC) catalyzes the carboxylation of biotin on its carrier protein (BCCP) and then the CO(2) group is transferred by the transcarboxylase to acetyl-CoA to form malonyl-CoA. The chain is Acetyl-coenzyme A carboxylase carboxyl transferase subunit beta from Bacillus cereus (strain G9842).